A 156-amino-acid polypeptide reads, in one-letter code: Ribosomal RNA large subunit methyltransferase H (156 aa).

Residues Leu73, Gly104, and 123-128 (LSPLTL) each bind S-adenosyl-L-methionine.

It belongs to the RNA methyltransferase RlmH family. As to quaternary structure, homodimer.

The protein resides in the cytoplasm. It carries out the reaction pseudouridine(1915) in 23S rRNA + S-adenosyl-L-methionine = N(3)-methylpseudouridine(1915) in 23S rRNA + S-adenosyl-L-homocysteine + H(+). Functionally, specifically methylates the pseudouridine at position 1915 (m3Psi1915) in 23S rRNA. The chain is Ribosomal RNA large subunit methyltransferase H from Photorhabdus laumondii subsp. laumondii (strain DSM 15139 / CIP 105565 / TT01) (Photorhabdus luminescens subsp. laumondii).